The sequence spans 507 residues: 2,3-bisphosphoglycerate-independent phosphoglycerate mutase (507 aa).

Mn(2+)-binding residues include aspartate 11 and serine 61. The active-site Phosphoserine intermediate is serine 61. Substrate contacts are provided by residues histidine 122, 150 to 151 (RD), arginine 182, arginine 188, 257 to 260 (RPDR), and lysine 332. Residues aspartate 397, histidine 401, aspartate 438, histidine 439, and histidine 456 each coordinate Mn(2+).

This sequence belongs to the BPG-independent phosphoglycerate mutase family. In terms of assembly, monomer. The cofactor is Mn(2+).

The enzyme catalyses (2R)-2-phosphoglycerate = (2R)-3-phosphoglycerate. Its pathway is carbohydrate degradation; glycolysis; pyruvate from D-glyceraldehyde 3-phosphate: step 3/5. Catalyzes the interconversion of 2-phosphoglycerate and 3-phosphoglycerate. This Mycoplasma genitalium (strain ATCC 33530 / DSM 19775 / NCTC 10195 / G37) (Mycoplasmoides genitalium) protein is 2,3-bisphosphoglycerate-independent phosphoglycerate mutase.